A 712-amino-acid chain; its full sequence is TIR domain-containing adapter molecule 1 (712 aa).

A TRIF-NTD region spans residues 1-153 (MACTGPSLPS…CGWDIAGDPG (153 aa)). Residues 84 to 91 (EDPEEPPD) carry the TRAF6-binding motif. Residues 207 to 210 (LEIS) carry the pLxIS motif motif. Ser210 is subject to Phosphoserine; by TBK1. Disordered stretches follow at residues 216–316 (PFLS…SLPL) and 336–384 (LSVE…LFPS). Lys229 is covalently cross-linked (Glycyl lysine isopeptide (Lys-Gly) (interchain with G-Cter in ubiquitin)). The short motif at 248–255 (QEPEEMSW) is the TRAF6-binding element. Over residues 265–275 (PELPSSPPPGL) the composition is skewed to pro residues. A TRAF6-binding motif is present at residues 299–309 (NYPVECTEGSA). Residues 347-369 (KPCPPTPTTPETSPPPPPPPPSS) are compositionally biased toward pro residues. The TIR domain maps to 393 to 553 (KFYNFVILHA…QDTRALREQS (161 aa)). The interval 512-712 (RLDEHSQIFA…APEDKTQEAE (201 aa)) is sufficient to induce apoptosis. Pro residues-rich tracts occupy residues 620 to 633 (PFPTWPGCPQPPPL) and 640 to 649 (TPPPPSPQPA). Residues 620-677 (PFPTWPGCPQPPPLHAWQAGTPPPPSPQPAAFPQSLPFPQSPAFPTASPAPPQSPGLQ) form a disordered region. Over residues 650–666 (AFPQSLPFPQSPAFPTA) the composition is skewed to low complexity.

As to quaternary structure, homodimer. Found in a multi-helicase-TICAM1 complex at least composed of DHX36, DDX1, DDX21 and TICAM1; this complex exists in resting cells with or without poly(I:C) RNA ligand stimulation. Interacts (via TIR domain) with DDX21 (via C-terminus). Interacts (via TIR domain) with DHX36 (via C-terminus). Interacts with AZI2 and IRF7. Interacts with TICAM2 in TLR4 recruitment. Interaction with PIAS4 inhibits the TICAM1-induced NF-kappa-B, IRF and IFNB1 activation. Interacts with IKBKB and IKBKE. Interaction with SARM1 blocks TICAM1-dependent transcription factor activation. Interacts with TRAF3. Interacts (when phosphorylated) with IRF3; following activation and phosphorylation on the pLxIS motif by TBK1, recruits IRF3. Interacts with TBK1, TRAF6 and RIPK1 and these interactions are enhanced in the presence of WDFY1. Interacts with TRAFD1. Interacts with UBQLN1 (via UBA domain). Interacts with TLR4. Interacts with WDFY1 in response to poly(I:C). Interacts (via the TIR domain) with TLR3 in response to poly(I:C) and this interaction is enhanced in the presence of WDFY1. Interacts with TRIM56. Component of a multi-helicase-TICAM1 complex that acts as a cytoplasmic sensor of viral double-stranded RNA (dsRNA) and plays a role in the activation of a cascade of antiviral responses including the induction of pro-inflammatory cytokines. Interacts (via the TIR domain) with TLR5. Interacts with TRIM8. Interacts with TAX1BP1 and TRIM32; these interactions target TICAM1 to TAX1BP1-mediated selective autophagic degradation. Interacts with DDX50. (Microbial infection) Interacts with hepatitis C virus (HCV) NS3/4A protease; this interaction leads to TICAM1 cleavage, thereby disrupting TLR3 signaling and preventing the establishment of an antiviral state. In terms of assembly, (Microbial infection) Interacts with Seneca Valley virus protease 3C; this interaction allows the cleavage of TICAM1/TRIF and subsequent suppression of host innate immunity. As to quaternary structure, (Microbial infection) Interacts (via C-terminus) with coxsackievirus B3 (CVB3) protease 3C. Post-translationally, phosphorylated by TBK1. Following activation, phosphorylated by TBK1 at Ser-210 in the pLxIS motif. The phosphorylated pLxIS motif constitutes an IRF3-binding motif, leading to recruitment of the transcription factor IRF3 to induce type-I interferons and other cytokines. In terms of processing, polyubiquitinated at Lys-229 by TRIM38 with 'Lys-48'-linked chains, leading to proteasomal degradation. Polyubiquitinated with 'Lys-6'- and 'Lys-33'-linked chains in a TRIM8-dependent manner; ubiquitination disrupts the interaction with TBK1 and subsequent interferon production. (Microbial infection) Cleaved and degraded by hepatitis A virus (HAV) protein 3CD allowing the virus to disrupt host TLR3 signaling. Post-translationally, (Microbial infection) Cleaved by CVB3 protease 3C allowing the virus to disrupt host TLR3 signaling. In terms of processing, (Microbial infection) Cleaved by Seneca Valley virus protease 3C allowing the virus to disrupt host TLR3 signaling. (Microbial infection) Cleaved by protease 3C of human enterovirus D68 (EV68) allowing the virus to disrupt host TLR3 signaling. Post-translationally, (Microbial infection) Cleaved by HCV protease NS3/4A, thereby disrupting TLR3 signaling and preventing the establishment of an antiviral state. As to expression, ubiquitously expressed but with higher levels in liver.

It localises to the cytoplasmic vesicle. Its subcellular location is the autophagosome. The protein resides in the cytoplasm. The protein localises to the cytosol. It is found in the mitochondrion. In terms of biological role, involved in innate immunity against invading pathogens. Adapter used by TLR3, TLR4 (through TICAM2) and TLR5 to mediate NF-kappa-B and interferon-regulatory factor (IRF) activation, and to induce apoptosis. Ligand binding to these receptors results in TRIF recruitment through its TIR domain. Distinct protein-interaction motifs allow recruitment of the effector proteins TBK1, TRAF6 and RIPK1, which in turn, lead to the activation of transcription factors IRF3 and IRF7, NF-kappa-B and FADD respectively. Phosphorylation by TBK1 on the pLxIS motif leads to recruitment and subsequent activation of the transcription factor IRF3 to induce expression of type I interferon and exert a potent immunity against invading pathogens. Component of a multi-helicase-TICAM1 complex that acts as a cytoplasmic sensor of viral double-stranded RNA (dsRNA) and plays a role in the activation of a cascade of antiviral responses including the induction of pro-inflammatory cytokines. The protein is TIR domain-containing adapter molecule 1 (TICAM1) of Homo sapiens (Human).